Here is a 211-residue protein sequence, read N- to C-terminus: Peptide methionine sulfoxide reductase MsrA (211 aa).

C52 is a catalytic residue.

It belongs to the MsrA Met sulfoxide reductase family.

The catalysed reaction is L-methionyl-[protein] + [thioredoxin]-disulfide + H2O = L-methionyl-(S)-S-oxide-[protein] + [thioredoxin]-dithiol. The enzyme catalyses [thioredoxin]-disulfide + L-methionine + H2O = L-methionine (S)-S-oxide + [thioredoxin]-dithiol. Functionally, has an important function as a repair enzyme for proteins that have been inactivated by oxidation. Catalyzes the reversible oxidation-reduction of methionine sulfoxide in proteins to methionine. The polypeptide is Peptide methionine sulfoxide reductase MsrA (Klebsiella pneumoniae (strain 342)).